We begin with the raw amino-acid sequence, 395 residues long: Elongation factor Tu (395 aa).

The region spanning 10-204 (KPHVNIGTIG…EVDAYIPTPE (195 aa)) is the tr-type G domain. The tract at residues 19–26 (GHVDHGKT) is G1. 19-26 (GHVDHGKT) is a GTP binding site. Thr26 provides a ligand contact to Mg(2+). The segment at 60 to 64 (GITIS) is G2. Residues 81–84 (DCPG) form a G3 region. Residues 81 to 85 (DCPGH) and 136 to 139 (NKCD) each bind GTP. A G4 region spans residues 136-139 (NKCD). Residues 174–176 (SAL) form a G5 region.

Belongs to the TRAFAC class translation factor GTPase superfamily. Classic translation factor GTPase family. EF-Tu/EF-1A subfamily. In terms of assembly, monomer.

Its subcellular location is the cytoplasm. It catalyses the reaction GTP + H2O = GDP + phosphate + H(+). Its function is as follows. GTP hydrolase that promotes the GTP-dependent binding of aminoacyl-tRNA to the A-site of ribosomes during protein biosynthesis. The protein is Elongation factor Tu of Bacillus cereus (strain ATCC 10987 / NRS 248).